Consider the following 158-residue polypeptide: Putative pre-16S rRNA nuclease (158 aa).

Belongs to the YqgF nuclease family.

The protein localises to the cytoplasm. In terms of biological role, could be a nuclease involved in processing of the 5'-end of pre-16S rRNA. The protein is Putative pre-16S rRNA nuclease of Acidiphilium cryptum (strain JF-5).